The sequence spans 364 residues: Ribosomal RNA large subunit methyltransferase F (364 aa).

A compositionally biased stretch (low complexity) spans 1–17; that stretch reads MPKPAIKTAAKPATSSA. The disordered stretch occupies residues 1–53; the sequence is MPKPAIKTAAKPATSSAGKRGKPITPKSVAKPQAAKPKTVSKPKVKPGEKKRL. Over residues 39-53 the composition is skewed to basic residues; the sequence is TVSKPKVKPGEKKRL.

Belongs to the methyltransferase superfamily. METTL16/RlmF family.

Its subcellular location is the cytoplasm. The catalysed reaction is adenosine(1618) in 23S rRNA + S-adenosyl-L-methionine = N(6)-methyladenosine(1618) in 23S rRNA + S-adenosyl-L-homocysteine + H(+). In terms of biological role, specifically methylates the adenine in position 1618 of 23S rRNA. This Shewanella sp. (strain MR-4) protein is Ribosomal RNA large subunit methyltransferase F.